We begin with the raw amino-acid sequence, 178 residues long: Large ribosomal subunit protein uL6 (178 aa).

This sequence belongs to the universal ribosomal protein uL6 family. Part of the 50S ribosomal subunit.

In terms of biological role, this protein binds to the 23S rRNA, and is important in its secondary structure. It is located near the subunit interface in the base of the L7/L12 stalk, and near the tRNA binding site of the peptidyltransferase center. The sequence is that of Large ribosomal subunit protein uL6 from Thermoplasma acidophilum (strain ATCC 25905 / DSM 1728 / JCM 9062 / NBRC 15155 / AMRC-C165).